We begin with the raw amino-acid sequence, 344 residues long: Ferrochelatase (344 aa).

Residues His214 and Glu295 each contribute to the Fe cation site.

This sequence belongs to the ferrochelatase family.

It localises to the cytoplasm. It carries out the reaction heme b + 2 H(+) = protoporphyrin IX + Fe(2+). Its pathway is porphyrin-containing compound metabolism; protoheme biosynthesis; protoheme from protoporphyrin-IX: step 1/1. Functionally, catalyzes the ferrous insertion into protoporphyrin IX. This chain is Ferrochelatase, found in Rhizobium johnstonii (strain DSM 114642 / LMG 32736 / 3841) (Rhizobium leguminosarum bv. viciae).